The chain runs to 226 residues: ATP synthase F(0) complex subunit a (226 aa).

6 helical membrane-spanning segments follow: residues 5–25 (LFAP…LIII), 68–88 (WSLM…LGML), 97–117 (QLSM…ATGF), 136–156 (FLIP…PVAL), 179–199 (LVLM…LALL), and 201–221 (ILEF…VSLY).

This sequence belongs to the ATPase A chain family. As to quaternary structure, component of the ATP synthase complex composed at least of ATP5F1A/subunit alpha, ATP5F1B/subunit beta, ATP5MC1/subunit c (homooctomer), MT-ATP6/subunit a, MT-ATP8/subunit 8, ATP5ME/subunit e, ATP5MF/subunit f, ATP5MG/subunit g, ATP5MK/subunit k, ATP5MJ/subunit j, ATP5F1C/subunit gamma, ATP5F1D/subunit delta, ATP5F1E/subunit epsilon, ATP5PF/subunit F6, ATP5PB/subunit b, ATP5PD/subunit d, ATP5PO/subunit OSCP. ATP synthase complex consists of a soluble F(1) head domain (subunits alpha(3) and beta(3)) - the catalytic core - and a membrane F(0) domain - the membrane proton channel (subunits c, a, 8, e, f, g, k and j). These two domains are linked by a central stalk (subunits gamma, delta, and epsilon) rotating inside the F1 region and a stationary peripheral stalk (subunits F6, b, d, and OSCP). Interacts with DNAJC30; interaction is direct.

Its subcellular location is the mitochondrion inner membrane. The catalysed reaction is H(+)(in) = H(+)(out). Functionally, subunit a, of the mitochondrial membrane ATP synthase complex (F(1)F(0) ATP synthase or Complex V) that produces ATP from ADP in the presence of a proton gradient across the membrane which is generated by electron transport complexes of the respiratory chain. ATP synthase complex consist of a soluble F(1) head domain - the catalytic core - and a membrane F(1) domain - the membrane proton channel. These two domains are linked by a central stalk rotating inside the F(1) region and a stationary peripheral stalk. During catalysis, ATP synthesis in the catalytic domain of F(1) is coupled via a rotary mechanism of the central stalk subunits to proton translocation. With the subunit c (ATP5MC1), forms the proton-conducting channel in the F(0) domain, that contains two crucial half-channels (inlet and outlet) that facilitate proton movement from the mitochondrial intermembrane space (IMS) into the matrix. Protons are taken up via the inlet half-channel and released through the outlet half-channel, following a Grotthuss mechanism. The protein is ATP synthase F(0) complex subunit a of Balaenoptera musculus (Blue whale).